A 325-amino-acid chain; its full sequence is Olfactory receptor 14L1 (325 aa).

Over 1-43 (MAQFNKNQLIACRRNGTTTSDFNQTEVAEFFLMGFSNSWDIQI) the chain is Extracellular. A helical transmembrane segment spans residues 44–64 (VHAALFFLVYLAAVIGNLLII). At 65-72 (ILTTLDVH) the chain is on the cytoplasmic side. The helical transmembrane segment at 73-93 (LQTPMYFFLRNLSFLDFCYIS) threads the bilayer. The Extracellular segment spans residues 94 to 117 (VTIPKSIVSSLTHDTSISFFGCAL). The chain crosses the membrane as a helical span at residues 118-138 (QAFFFMDLATTEVAILTVMSY). Residues 139–151 (DRYMAICRPLHYE) lie on the Cytoplasmic side of the membrane. The chain crosses the membrane as a helical span at residues 152 to 172 (VIINQGVCLRMMAMSWLSGVI). Topologically, residues 173 to 214 (CGFMHVIATFSLPFCGRNRIRQFFCNIPQLLSLLDPKVITIE) are extracellular. A helical membrane pass occupies residues 215-235 (IGVMVFGTSLVIISFVVITLS). The Cytoplasmic portion of the chain corresponds to 236–255 (YMYIFSVIMRIPSKEGRSKT). Residues 256 to 276 (FSTCIPHLVVVTLFMISGSIA) form a helical membrane-spanning segment. The Extracellular segment spans residues 277 to 289 (YVKPISNSPPVLD). A helical transmembrane segment spans residues 290-310 (VFLSAFYTVVPPTLNPVIYSL). Residues 311–325 (RNRDMKAALRRQCGP) are Cytoplasmic-facing.

The protein belongs to the G-protein coupled receptor 1 family.

The protein resides in the cell membrane. Odorant receptor. This chain is Olfactory receptor 14L1, found in Homo sapiens (Human).